A 61-amino-acid polypeptide reads, in one-letter code: Translational regulator CsrA (61 aa).

The protein belongs to the CsrA/RsmA family. As to quaternary structure, homodimer; the beta-strands of each monomer intercalate to form a hydrophobic core, while the alpha-helices form wings that extend away from the core.

The protein localises to the cytoplasm. Functionally, a key translational regulator that binds mRNA to regulate translation initiation and/or mRNA stability. Mediates global changes in gene expression, shifting from rapid growth to stress survival by linking envelope stress, the stringent response and the catabolite repression systems. Usually binds in the 5'-UTR; binding at or near the Shine-Dalgarno sequence prevents ribosome-binding, repressing translation, binding elsewhere in the 5'-UTR can activate translation and/or stabilize the mRNA. Its function is antagonized by small RNA(s). The chain is Translational regulator CsrA from Actinobacillus succinogenes (strain ATCC 55618 / DSM 22257 / CCUG 43843 / 130Z).